We begin with the raw amino-acid sequence, 694 residues long: MYTDFSKLRNIGISAHIDSGKTTLTERILFYTKRIHAIHEVKGKDGVGATMDSMELERERGITIASAATHCEWKGLHLNIIDTPGHVDFTIEVERSLRVLDGAILVLCSVAGVQSQSLTVDRQMRRYNVPRLAFVNKCDRSGANPIRVKDQLREKLQHNPVLMQLPIGLEDKFEGVVDLVKMKAFRFSGDDGEVITESEIPADMQADAARAREELLDAASMFSDELTDAILEDRVTEELIKAAVRKGTLALKLTPVFMGSAYKNKAVQKLLDGVVDYLPDPTEVVNEAHDLTKDEEKVALTIDNEKPTVALAFKLEDGRYGQLTYLRIYQGKLSRDMFITNMRTKKDHRIGRLVRMHSDQMEDIDAAGSGDIVAMFGVDCNSGDTFTDGTVKLNMTSMHVPEPVIALSIKPVDSKSETNMGKALRRFTREDPTFRAGLDEESGETIIRGMGELHLEVYIERMKREYNCIVEVSPPQVAYRETVSQRADFAYTHKKQTGGSGQFGRVCGYIEPCEQQFEFVDDVVGGAIPREFISAVEKGFRSMLAKGRLLGFPVVNTRVVINDGASHAVDSSDIAFQEAARGAWREGFDRAKPRLLEPIMRVVCEGPAEFSGGILGTLMQRRAMIIGSQDDGGLARIEAEVPLAEMFGYSTTLRSATQGKAEFSMEFSRYLPVPAAMAEELMTKASKKAEGGKK.

The tr-type G domain maps to 6-282 (SKLRNIGISA…GVVDYLPDPT (277 aa)). GTP-binding positions include 15-22 (AHIDSGKT), 82-86 (DTPGH), and 136-139 (NKCD).

This sequence belongs to the TRAFAC class translation factor GTPase superfamily. Classic translation factor GTPase family. EF-G/EF-2 subfamily.

The protein resides in the cytoplasm. In terms of biological role, catalyzes the GTP-dependent ribosomal translocation step during translation elongation. During this step, the ribosome changes from the pre-translocational (PRE) to the post-translocational (POST) state as the newly formed A-site-bound peptidyl-tRNA and P-site-bound deacylated tRNA move to the P and E sites, respectively. Catalyzes the coordinated movement of the two tRNA molecules, the mRNA and conformational changes in the ribosome. This is Elongation factor G 2 from Anaeromyxobacter dehalogenans (strain 2CP-C).